The primary structure comprises 884 residues: Putative GTP diphosphokinase RSH1, chloroplastic (884 aa).

A chloroplast-targeting transit peptide spans 1–55 (MTSASSMSVSVECVNICNLTKGDGNARSDCSALSCAWKAPRALTGFLASTAHPPV). Residues 172–279 (FIIHPVAVAR…VKLADRLHNM (108 aa)) form the HD domain. The 64-residue stretch at 563-626 (LGSRVFVFTP…ENAEVVEIVT (64 aa)) folds into the TGS domain. A compositionally biased stretch (polar residues) spans 711–727 (QSQDKSRDTTPAPQNGS). Positions 711–747 (QSQDKSRDTTPAPQNGSVWAPKVNGKHNKAIKNSSSD) are disordered. An ACT domain is found at 797 to 868 (WLCVVSMDRK…LVLGVLGWSS (72 aa)).

Belongs to the RelA/SpoT family. Interacts with RPP4. Interacts with RPP5. Expressed in hypocotyls, shoots, cotyledons, rosette leaves, sepals and pistils.

The protein localises to the plastid. The protein resides in the chloroplast. It carries out the reaction GTP + ATP = guanosine 3'-diphosphate 5'-triphosphate + AMP. Its function is as follows. May be involved in a rapid plant ppGpp (guanosine 3'-diphosphate 5'-diphosphate)-mediated response to pathogens and other stresses. Unable to functionally complement E.coli relA mutants. This Arabidopsis thaliana (Mouse-ear cress) protein is Putative GTP diphosphokinase RSH1, chloroplastic (RSH1).